Here is a 109-residue protein sequence, read N- to C-terminus: Aquaporin-2 (109 aa).

The Cytoplasmic portion of the chain corresponds to 1–6 (SIAFSR). A helical transmembrane segment spans residues 7–27 (AVFTEFLATLLFVFFGLGSAL). Over 28-35 (NWPQALPS) the chain is Extracellular. A helical membrane pass occupies residues 36–54 (VLQIAMAFGLAIGTLVQML). Residues 55–59 (GHISG) lie on the Cytoplasmic side of the membrane. The segment at residues 60 to 69 (AHINPAVTVA) is an intramembrane region (discontinuously helical). Positions 63-65 (NPA) match the NPA 1 motif. Residues 70–80 (CLVGCHISFLR) are Cytoplasmic-facing. A helical membrane pass occupies residues 81–102 (AAFYVAAQLLGAVAGAALLHEV). Residues 103 to 109 (TPPSIRG) lie on the Extracellular side of the membrane.

It belongs to the MIP/aquaporin (TC 1.A.8) family. In terms of assembly, homotetramer. Serine phosphorylation is necessary and sufficient for expression at the apical membrane. Endocytosis is not phosphorylation-dependent. Post-translationally, N-glycosylated.

Its subcellular location is the apical cell membrane. The protein resides in the basolateral cell membrane. The protein localises to the cell membrane. It is found in the cytoplasmic vesicle membrane. It localises to the golgi apparatus. Its subcellular location is the trans-Golgi network membrane. The enzyme catalyses H2O(in) = H2O(out). It carries out the reaction glycerol(in) = glycerol(out). Functionally, forms a water-specific channel that provides the plasma membranes of renal collecting duct with high permeability to water, thereby permitting water to move in the direction of an osmotic gradient. Plays an essential role in renal water homeostasis. Could also be permeable to glycerol. This Erinaceus europaeus (Western European hedgehog) protein is Aquaporin-2.